We begin with the raw amino-acid sequence, 147 residues long: uncharacterized protein (147 aa).

The helical transmembrane segment at 69-89 (IFFFLSLYLSSIKIPMLILNI) threads the bilayer.

It is found in the membrane. This is an uncharacterized protein from Saccharomyces cerevisiae (strain ATCC 204508 / S288c) (Baker's yeast).